The primary structure comprises 92 residues: Small ribosomal subunit protein uS19 (92 aa).

The protein belongs to the universal ribosomal protein uS19 family.

Its function is as follows. Protein S19 forms a complex with S13 that binds strongly to the 16S ribosomal RNA. The protein is Small ribosomal subunit protein uS19 of Baumannia cicadellinicola subsp. Homalodisca coagulata.